Consider the following 107-residue polypeptide: MSKVVYVSHDGTRRELDVADGVSLMQAAVSNGIYDIVGDCGGSASCATCHVYVNEAFTDKVPAANEREIGMLECVTAELKPNSRLCCQIIMTPELDGIVVDVPDRQW.

The 2Fe-2S ferredoxin-type domain occupies 2–106 (SKVVYVSHDG…GIVVDVPDRQ (105 aa)). Positions 40, 46, 49, and 87 each coordinate [2Fe-2S] cluster.

Belongs to the adrenodoxin/putidaredoxin family. Monomer. [2Fe-2S] cluster is required as a cofactor.

Its function is as follows. The oxidation of camphor by cytochrome P450-CAM requires the participation of a flavoprotein, putidaredoxin reductase, and an iron-sulfur protein, putidaredoxin, to mediate the transfer of electrons from NADH to P450 for oxygen activation. The chain is Putidaredoxin (camB) from Pseudomonas putida (Arthrobacter siderocapsulatus).